The primary structure comprises 286 residues: L-cysteine S-thiosulfotransferase subunit SoxA (286 aa).

The N-terminal stretch at 1-26 (MTVSKRFLAPVFAMVGGLVLAFSANA) is a signal peptide. Residues 80 to 166 (LAVERGADIW…ALTSYIKHQS (87 aa)) form the Cytochrome c domain. Heme contacts are provided by Cys-100, Cys-103, His-104, Cys-138, Cys-202, Cys-205, and His-206. Arg-243 is a substrate binding site. Cys-247 is a heme binding site. Catalysis depends on Cys-247, which acts as the Cysteine persulfide intermediate.

This sequence belongs to the SoxA family. As to quaternary structure, heterodimer of SoxA and SoxX. Heme is required as a cofactor. Post-translationally, cysteine persulfide at Cys-247.

The protein localises to the periplasm. The catalysed reaction is L-cysteinyl-[SoxY protein] + thiosulfate + 2 Fe(III)-[cytochrome c] = S-sulfosulfanyl-L-cysteinyl-[SoxY protein] + 2 Fe(II)-[cytochrome c] + 2 H(+). It catalyses the reaction S-sulfanyl-L-cysteinyl-[SoxY protein] + thiosulfate + 2 Fe(III)-[cytochrome c] = S-(2-sulfodisulfanyl)-L-cysteinyl-[SoxY protein] + 2 Fe(II)-[cytochrome c] + 2 H(+). Its function is as follows. C-type diheme cytochrome, which is part of the SoxAX cytochrome complex involved in sulfur oxidation. The SoxAX complex catalyzes the formation of a heterodisulfide bond between the conserved cysteine residue on a sulfur carrier SoxYZ complex subunit SoxY and thiosulfate or other inorganic sulfur substrates. This leads to the liberation of two electrons, which may be transferred from the SoxAX complex to another cytochrome c that then channels them into the respiratory electron transport chain. Some electrons may be used for reductive CO(2) fixation. The polypeptide is L-cysteine S-thiosulfotransferase subunit SoxA (Pseudaminobacter salicylatoxidans).